Here is a 372-residue protein sequence, read N- to C-terminus: Cobalt-precorrin-5B C(1)-methyltransferase (372 aa).

The protein belongs to the CbiD family.

It carries out the reaction Co-precorrin-5B + S-adenosyl-L-methionine = Co-precorrin-6A + S-adenosyl-L-homocysteine. The protein operates within cofactor biosynthesis; adenosylcobalamin biosynthesis; cob(II)yrinate a,c-diamide from sirohydrochlorin (anaerobic route): step 6/10. Its function is as follows. Catalyzes the methylation of C-1 in cobalt-precorrin-5B to form cobalt-precorrin-6A. The chain is Cobalt-precorrin-5B C(1)-methyltransferase from Geobacillus thermodenitrificans (strain NG80-2).